The chain runs to 274 residues: uncharacterized protein (274 aa).

An N-terminal signal peptide occupies residues 1 to 30 (MTVYTPTSERQAPATTHRQMWALGDYAAIA).

This sequence to M.tuberculosis Rv1405c.

This is an uncharacterized protein from Mycobacterium tuberculosis (strain CDC 1551 / Oshkosh).